A 171-amino-acid polypeptide reads, in one-letter code: MFRAIAIIRAHEVIDAVPASHIVLERDERHLRRKAITLENGEKILADFAEPVVLEHGDRLVLDDGREIEIRAASEELYEIRGRDPRHIAELAWHIGNRHLAAQIETDHIFILRDHVIRVMLEGLGATVTDVVAIFSPLRGAYSGGHQHHHGHDHDHGHHGHDHDHHHPDHE.

The tract at residues 143–171 (SGGHQHHHGHDHDHGHHGHDHDHHHPDHE) is disordered. Positions 152–171 (HDHDHGHHGHDHDHHHPDHE) are enriched in basic and acidic residues.

Belongs to the UreE family.

The protein localises to the cytoplasm. In terms of biological role, involved in urease metallocenter assembly. Binds nickel. Probably functions as a nickel donor during metallocenter assembly. This chain is Urease accessory protein UreE, found in Brucella abortus biovar 1 (strain 9-941).